The sequence spans 363 residues: MPRYLGLMSGTSLDGMDIVLIEQGDRTTLLASHYLPMPAGLREDILALCVPGPDEIARAAEVEQRWVALAAQGVRELLLQQQMSPDEVRAIGSHGQTIRHEPARHFTVQIGNPALLAELTGIDVVADFRRRDVAAGGQGAPLVPAFHQALFGDDDTSRAVLNIGGFSNVSLLSPGKPVRGFDCGPGNVLMDAWIHHQRGEHFDRDGAWAASGQVNHALLASLLADEFFAARGPKSTGRERFNLPWLQEHLARHPALPAADIQATLLELSARSISESLLDAQPDCEEVLVCGGGAFNTALMKRLAMLMPEARVASTDEYGIPPAWMEGMAFAWLAHRFLERLPGNCPDVTGALGPRTLGALYPA.

10 to 17 contributes to the ATP binding site; the sequence is GTSLDGMD.

Belongs to the anhydro-N-acetylmuramic acid kinase family.

The enzyme catalyses 1,6-anhydro-N-acetyl-beta-muramate + ATP + H2O = N-acetyl-D-muramate 6-phosphate + ADP + H(+). It participates in amino-sugar metabolism; 1,6-anhydro-N-acetylmuramate degradation. The protein operates within cell wall biogenesis; peptidoglycan recycling. Functionally, catalyzes the specific phosphorylation of 1,6-anhydro-N-acetylmuramic acid (anhMurNAc) with the simultaneous cleavage of the 1,6-anhydro ring, generating MurNAc-6-P. Is required for the utilization of anhMurNAc either imported from the medium or derived from its own cell wall murein, and thus plays a role in cell wall recycling. Contributes to intrinsic fosfomycin resistance in P.aeruginosa. The sequence is that of Anhydro-N-acetylmuramic acid kinase from Pseudomonas aeruginosa (strain ATCC 15692 / DSM 22644 / CIP 104116 / JCM 14847 / LMG 12228 / 1C / PRS 101 / PAO1).